A 124-amino-acid chain; its full sequence is Transcription initiation factor TFIID subunit 13 (124 aa).

The span at 1–16 (MADEEEDPTFEEENEE) shows a compositional bias: acidic residues. Positions 1–28 (MADEEEDPTFEEENEEIGGGAEGGQGKR) are disordered. One can recognise a Histone-fold domain in the interval 32–74 (FSKELRCMMYGFGDDQNPYTESVDILEDLVIEFITEMTHKAMS).

It belongs to the TAF13 family. As to quaternary structure, component of the TFIID basal transcription factor complex, composed of TATA-box-binding protein TBP, and a number of TBP-associated factors (TAFs), including TAF1, TAF2, TAF3, TAF4, TAF5, TAF6, TAF7, TAF8, TAF9, TAF10, TAF11, TAF12 and TAF13. Interacts with TBP, and more strongly with TAF10 and TAF11.

It is found in the nucleus. The TFIID basal transcription factor complex plays a major role in the initiation of RNA polymerase II (Pol II)-dependent transcription. TFIID recognizes and binds promoters via its subunit TBP, a TATA-box-binding protein, and promotes assembly of the pre-initiation complex (PIC). The TFIID complex consists of TBP and TBP-associated factors (TAFs), including TAF1, TAF2, TAF3, TAF4, TAF5, TAF6, TAF7, TAF8, TAF9, TAF10, TAF11, TAF12 and TAF13. TAF13, together with TAF11 and TBP, play key roles during promoter binding by the TFIID and TFIIA transcription factor complexes. This Bos taurus (Bovine) protein is Transcription initiation factor TFIID subunit 13.